The chain runs to 319 residues: HTH-type transcriptional regulator YidZ (319 aa).

One can recognise an HTH lysR-type domain in the interval 8–65 (LDLNLLLCLQLLMQERSVTKAAKRMNVTPSAVSKSLAKLRAWFDDPLFVNTPLGLAPT). Residues 25–44 (VTKAAKRMNVTPSAVSKSLA) constitute a DNA-binding region (H-T-H motif).

The protein belongs to the LysR transcriptional regulatory family.

Functionally, involved in anaerobic NO protection. In Salmonella typhi, this protein is HTH-type transcriptional regulator YidZ.